Consider the following 710-residue polypeptide: Conserved oligomeric Golgi complex subunit 2 (710 aa).

The protein belongs to the COG2 family. As to quaternary structure, component of the conserved oligomeric Golgi complex which is composed of eight different subunits and is required for normal Golgi morphology and localization.

The protein localises to the golgi apparatus membrane. In terms of biological role, required for normal Golgi morphology and function. In Drosophila melanogaster (Fruit fly), this protein is Conserved oligomeric Golgi complex subunit 2.